We begin with the raw amino-acid sequence, 236 residues long: DNA repair protein RecO (236 aa).

It belongs to the RecO family.

Functionally, involved in DNA repair and RecF pathway recombination. The protein is DNA repair protein RecO of Stutzerimonas stutzeri (strain A1501) (Pseudomonas stutzeri).